We begin with the raw amino-acid sequence, 159 residues long: SsrA-binding protein (159 aa).

Belongs to the SmpB family.

The protein resides in the cytoplasm. In terms of biological role, required for rescue of stalled ribosomes mediated by trans-translation. Binds to transfer-messenger RNA (tmRNA), required for stable association of tmRNA with ribosomes. tmRNA and SmpB together mimic tRNA shape, replacing the anticodon stem-loop with SmpB. tmRNA is encoded by the ssrA gene; the 2 termini fold to resemble tRNA(Ala) and it encodes a 'tag peptide', a short internal open reading frame. During trans-translation Ala-aminoacylated tmRNA acts like a tRNA, entering the A-site of stalled ribosomes, displacing the stalled mRNA. The ribosome then switches to translate the ORF on the tmRNA; the nascent peptide is terminated with the 'tag peptide' encoded by the tmRNA and targeted for degradation. The ribosome is freed to recommence translation, which seems to be the essential function of trans-translation. This is SsrA-binding protein from Actinobacillus pleuropneumoniae serotype 5b (strain L20).